We begin with the raw amino-acid sequence, 179 residues long: Large ribosomal subunit protein uL5 (179 aa).

This sequence belongs to the universal ribosomal protein uL5 family. As to quaternary structure, part of the 50S ribosomal subunit; part of the 5S rRNA/L5/L18/L25 subcomplex. Contacts the 5S rRNA and the P site tRNA. Forms a bridge to the 30S subunit in the 70S ribosome.

Functionally, this is one of the proteins that bind and probably mediate the attachment of the 5S RNA into the large ribosomal subunit, where it forms part of the central protuberance. In the 70S ribosome it contacts protein S13 of the 30S subunit (bridge B1b), connecting the 2 subunits; this bridge is implicated in subunit movement. Contacts the P site tRNA; the 5S rRNA and some of its associated proteins might help stabilize positioning of ribosome-bound tRNAs. The sequence is that of Large ribosomal subunit protein uL5 from Synechococcus elongatus (strain ATCC 33912 / PCC 7942 / FACHB-805) (Anacystis nidulans R2).